The primary structure comprises 266 residues: MEAAQAGDLTRRQELLAPPCLDTESLRKSRPPALEPGALRCLTPNIRSLWPTCQDSVSTALPFLQEKEKGLPGSPSPATQVLGSCWELMVIGMSDHLSMARNPRGTQCPNLEISSATSPASLQRRPRKQLNPRMGIEKVDPRFKGVTLEFQIQPDSSLQIVPTYSLPGRSCSQKLPASPSKALASPGSSEALGPRRCASCRTQRTPLWRDAEDGTPLCNACGIRYKKYGTRCSSCWLVPRKSIQPKRLCGRCGMSQDPHLSPTQEL.

3 disordered regions span residues 1-31, 106-129, and 171-191; these read MEAA…KSRP, TQCP…PRKQ, and CSQK…SSEA. Residues 106 to 121 show a composition bias toward polar residues; it reads TQCPNLEISSATSPAS. The GATA-type zinc finger occupies 197–221; sequence CASCRTQRTPLWRDAEDGTPLCNAC.

In terms of tissue distribution, specifically expressed in adult testis and ovary. Expressed at high levels in the somatic cells of the developing gonads, including Leydig cells in the testes and granulosa cells in the ovaries.

The protein resides in the nucleus. In terms of biological role, transcriptional regulator that plays a key role in germ cell development. Determines the oogenic fate by activating key genes for the oogenic program and meiotic prophase entry. Acts downstream of bone morphogenetic protein (BMP) by regulating expression of genes required for the oogenic programs, which are repressed by Polycomb activities in sexually uncommitted germ cells. Regulates expression of STRA8, a central downstream effector for the meiotic program. Acts independently of retinoic acid (RA). In males, not required for germ-cell sex determination, but required to allow the spermatogonia to efficiently accomplish the meiotic prophase. In Mus musculus (Mouse), this protein is GATA-type zinc finger protein 1.